The chain runs to 453 residues: Carbamoyl phosphate synthase arginine-specific small chain (453 aa).

The transit peptide at 1–28 directs the protein to the mitochondrion; it reads MFARVFKAMPARASALTSVNASIQARFM. In terms of domain architecture, Glutamine amidotransferase type-1 spans 219–406; the sequence is HVAVIDCGVK…IDSVKKYKAS (188 aa). C295 acts as the Nucleophile in catalysis. Residues H379 and E381 contribute to the active site.

Belongs to the CarA family. In terms of assembly, heterodimer composed of 2 chains; the small (or glutamine) chain promotes the hydrolysis of glutamine to ammonia, which is used by the large (or ammonia) chain to synthesize carbamoyl phosphate.

Its subcellular location is the mitochondrion matrix. It carries out the reaction hydrogencarbonate + L-glutamine + 2 ATP + H2O = carbamoyl phosphate + L-glutamate + 2 ADP + phosphate + 2 H(+). It catalyses the reaction L-glutamine + H2O = L-glutamate + NH4(+). It participates in amino-acid biosynthesis; L-arginine biosynthesis; carbamoyl phosphate from bicarbonate: step 1/1. Functionally, small subunit of the arginine-specific carbamoyl phosphate synthase (CPSase). CPSase catalyzes the formation of carbamoyl phosphate from the ammonia moiety of glutamine, carbonate, and phosphate donated by ATP, the first step of the arginine biosynthetic pathway. The small subunit (glutamine amidotransferase) binds and cleaves glutamine to supply the large subunit with the substrate ammonia. This Neosartorya fischeri (strain ATCC 1020 / DSM 3700 / CBS 544.65 / FGSC A1164 / JCM 1740 / NRRL 181 / WB 181) (Aspergillus fischerianus) protein is Carbamoyl phosphate synthase arginine-specific small chain (cpa1).